Consider the following 26-residue polypeptide: Superoxide dismutase [Cu-Zn] (26 aa).

Residue cysteine 7 is the site of S-palmitoyl cysteine attachment.

Belongs to the Cu-Zn superoxide dismutase family. In terms of assembly, homotrimer. It depends on Cu cation as a cofactor. Zn(2+) serves as cofactor.

The protein localises to the cytoplasm. The protein resides in the nucleus. The catalysed reaction is 2 superoxide + 2 H(+) = H2O2 + O2. Functionally, destroys radicals which are normally produced within the cells and which are toxic to biological systems. In Paralichthys olivaceus (Bastard halibut), this protein is Superoxide dismutase [Cu-Zn] (sod1).